Consider the following 178-residue polypeptide: Large ribosomal subunit protein uL6 (178 aa).

This sequence belongs to the universal ribosomal protein uL6 family. In terms of assembly, part of the 50S ribosomal subunit.

Functionally, this protein binds to the 23S rRNA, and is important in its secondary structure. It is located near the subunit interface in the base of the L7/L12 stalk, and near the tRNA binding site of the peptidyltransferase center. The polypeptide is Large ribosomal subunit protein uL6 (Gluconobacter oxydans (strain 621H) (Gluconobacter suboxydans)).